The sequence spans 330 residues: ADP-L-glycero-D-manno-heptose-6-epimerase (330 aa).

Residues 11-12 (FI), 32-33 (DN), K39, K54, 75-79 (EGACS), and N92 contribute to the NADP(+) site. The Proton acceptor role is filled by Y139. K143 is a binding site for NADP(+). N168 is a substrate binding site. NADP(+) contacts are provided by V169 and K177. Catalysis depends on K177, which acts as the Proton acceptor. Residues R179, H186, 200–203 (FGEY), R213, and Y292 each bind substrate.

The protein belongs to the NAD(P)-dependent epimerase/dehydratase family. HldD subfamily. In terms of assembly, homopentamer. NADP(+) is required as a cofactor.

It carries out the reaction ADP-D-glycero-beta-D-manno-heptose = ADP-L-glycero-beta-D-manno-heptose. It participates in nucleotide-sugar biosynthesis; ADP-L-glycero-beta-D-manno-heptose biosynthesis; ADP-L-glycero-beta-D-manno-heptose from D-glycero-beta-D-manno-heptose 7-phosphate: step 4/4. Functionally, catalyzes the interconversion between ADP-D-glycero-beta-D-manno-heptose and ADP-L-glycero-beta-D-manno-heptose via an epimerization at carbon 6 of the heptose. This Paraburkholderia phytofirmans (strain DSM 17436 / LMG 22146 / PsJN) (Burkholderia phytofirmans) protein is ADP-L-glycero-D-manno-heptose-6-epimerase.